Consider the following 250-residue polypeptide: Proteasome subunit alpha type-7 (250 aa).

It belongs to the peptidase T1A family. In terms of assembly, the 26S proteasome consists of a 20S proteasome core and two 19S regulatory subunits. The 20S proteasome core is composed of 28 subunits that are arranged in four stacked rings, resulting in a barrel-shaped structure. The two end rings are each formed by seven alpha subunits, and the two central rings are each formed by seven beta subunits. The catalytic chamber with the active sites is on the inside of the barrel.

It is found in the cytoplasm. Its subcellular location is the nucleus. The proteasome is a multicatalytic proteinase complex which is characterized by its ability to cleave peptides with Arg, Phe, Tyr, Leu, and Glu adjacent to the leaving group at neutral or slightly basic pH. The proteasome has an ATP-dependent proteolytic activity. The protein is Proteasome subunit alpha type-7 (psmA7) of Dictyostelium discoideum (Social amoeba).